An 84-amino-acid chain; its full sequence is MGGFSIWHWLIVLLIVVMVFGTKKLRNMGSDLGGAVKGFKDGMKDGGQSPADEKPVVPASQVTNAQAADKAERNTIDVEARQKS.

Residues 1 to 21 (MGGFSIWHWLIVLLIVVMVFG) traverse the membrane as a helical segment. Positions 40–84 (KDGMKDGGQSPADEKPVVPASQVTNAQAADKAERNTIDVEARQKS) are disordered. Over residues 69–84 (DKAERNTIDVEARQKS) the composition is skewed to basic and acidic residues.

Belongs to the TatA/E family. As to quaternary structure, the Tat system comprises two distinct complexes: a TatABC complex, containing multiple copies of TatA, TatB and TatC subunits, and a separate TatA complex, containing only TatA subunits. Substrates initially bind to the TatABC complex, which probably triggers association of the separate TatA complex to form the active translocon.

The protein localises to the cell inner membrane. In terms of biological role, part of the twin-arginine translocation (Tat) system that transports large folded proteins containing a characteristic twin-arginine motif in their signal peptide across membranes. TatA could form the protein-conducting channel of the Tat system. This Polaromonas naphthalenivorans (strain CJ2) protein is Sec-independent protein translocase protein TatA.